The following is a 473-amino-acid chain: Gamma-aminobutyric acid receptor subunit beta-3 (473 aa).

Residues 1 to 25 (MWGFAGGRLFGIFSAPVLVAVVCCA) form the signal peptide. The Extracellular portion of the chain corresponds to 26–246 (QSVNDPGNMS…FRLKRNIGYF (221 aa)). N-linked (GlcNAc...) asparagine glycosylation is found at N33 and N105. Y122 contributes to the histamine binding site. C161 and C175 are oxidised to a cystine. N-linked (GlcNAc...) asparagine glycosylation is present at N174. 4-aminobutanoate-binding residues include E180, Y182, and T227. Residues 181 to 182 (SY) and T227 each bind histamine. Residues 247-267 (ILQTYMPSILITILSWVSFWI) form a helical membrane-spanning segment. Over 268–271 (NYDA) the chain is Cytoplasmic. The helical transmembrane segment at 272-292 (SAARVALGITTVLTMTTINTH) threads the bilayer. Residues 293–304 (LRETLPKIPYVK) are Extracellular-facing. The helical transmembrane segment at 305-328 (AIDMYLMGCFVFVFLALLEYAFVN) threads the bilayer. Residues 329–447 (YIFFGRGPQR…KIPDLTDVNA (119 aa)) lie on the Cytoplasmic side of the membrane. A helical membrane pass occupies residues 448 to 470 (IDRWSRIVFPFTFSLFNLVYWLY). Residues 471–473 (YVN) lie on the Extracellular side of the membrane.

This sequence belongs to the ligand-gated ion channel (TC 1.A.9) family. Gamma-aminobutyric acid receptor (TC 1.A.9.5) subfamily. GABRB3 sub-subfamily. As to quaternary structure, heteropentamer, formed by a combination of alpha (GABRA1-6), beta (GABRB1-3), gamma (GABRG1-3), delta (GABRD), epsilon (GABRE), rho (GABRR1-3), pi (GABRP) and theta (GABRQ) chains, each subunit exhibiting distinct physiological and pharmacological properties. Can form functional homopentamers (in vitro). Interacts with UBQLN1. May interact with KIF21B. Identified in a complex of 720 kDa composed of LHFPL4, NLGN2, GABRA1, GABRB2, GABRG2 and GABRB3. Interacts with LHFPL4. Interacts with GIT1; this interaction is required for synaptic GABRB3 surface stability and inhibitory synapse strength.

It localises to the postsynaptic cell membrane. Its subcellular location is the cell membrane. The protein localises to the cytoplasmic vesicle membrane. It carries out the reaction chloride(in) = chloride(out). Potentiated by histamine. Its function is as follows. Beta subunit of the heteropentameric ligand-gated chloride channel gated by gamma-aminobutyric acid (GABA), a major inhibitory neurotransmitter in the brain. GABA-gated chloride channels, also named GABA(A) receptors (GABAAR), consist of five subunits arranged around a central pore and contain GABA active binding site(s) located at the alpha and beta subunit interface(s). GABAARs containing beta-3/GABRB3 subunit are found at both synaptic and extrasynaptic sites. When activated by GABA, GABAARs selectively allow the flow of chloride anions across the cell membrane down their electrochemical gradient. Chloride influx into the postsynaptic neuron following GABAAR opening decreases the neuron ability to generate a new action potential, thereby reducing nerve transmission. GABAARs containing alpha-1 and beta-3 subunits exhibit synaptogenic activity; the gamma-2 subunit being necessary but not sufficient to induce rapid synaptic contacts formation. Extrasynaptic beta-3 receptors contribute to the tonic GABAergic inhibition. GABAARs containing alpha-1, beta-3 and epsilon subunits may permit spontaneous chloride channel activity while preserving the structural information required for GABA-gated openings. Beta-containing GABAARs can simultaneously bind GABA and histamine where histamine binds at the interface of two neighboring beta subunits, which may be involved in the regulation of sleep and wakefulness. Plays an important role in somatosensation and in the production of antinociception. This chain is Gamma-aminobutyric acid receptor subunit beta-3, found in Mus musculus (Mouse).